Here is a 629-residue protein sequence, read N- to C-terminus: Phosphomethylpyrimidine synthase (629 aa).

Positions 1–24 (MSTKPKNAAHLSESAQVDSGSVQP) are disordered. Residues 13-24 (ESAQVDSGSVQP) are compositionally biased toward polar residues. Residues asparagine 233, methionine 262, tyrosine 291, histidine 327, 347–349 (SRG), 388–391 (DGLR), and glutamate 427 contribute to the substrate site. Histidine 431 is a Zn(2+) binding site. Tyrosine 454 lines the substrate pocket. Histidine 495 lines the Zn(2+) pocket. Positions 575, 578, and 583 each coordinate [4Fe-4S] cluster.

This sequence belongs to the ThiC family. As to quaternary structure, homodimer. It depends on [4Fe-4S] cluster as a cofactor.

The catalysed reaction is 5-amino-1-(5-phospho-beta-D-ribosyl)imidazole + S-adenosyl-L-methionine = 4-amino-2-methyl-5-(phosphooxymethyl)pyrimidine + CO + 5'-deoxyadenosine + formate + L-methionine + 3 H(+). The protein operates within cofactor biosynthesis; thiamine diphosphate biosynthesis. Its function is as follows. Catalyzes the synthesis of the hydroxymethylpyrimidine phosphate (HMP-P) moiety of thiamine from aminoimidazole ribotide (AIR) in a radical S-adenosyl-L-methionine (SAM)-dependent reaction. This chain is Phosphomethylpyrimidine synthase, found in Pseudomonas syringae pv. tomato (strain ATCC BAA-871 / DC3000).